The primary structure comprises 47 residues: Potassium channel toxin gamma-KTx 5.1 (47 aa).

4 cysteine pairs are disulfide-bonded: C5–C23, C11–C34, C20–C39, and C24–C41.

This sequence belongs to the ergtoxin family. Gamma-KTx 5 subfamily. In terms of tissue distribution, expressed by the venom gland.

Its subcellular location is the secreted. Functionally, reversibly blocks Kv11/ERG potassium channels. This Centruroides sculpturatus (Arizona bark scorpion) protein is Potassium channel toxin gamma-KTx 5.1.